The primary structure comprises 382 residues: Queuine tRNA-ribosyltransferase (382 aa).

Asp93 serves as the catalytic Proton acceptor. Substrate contacts are provided by residues 93–97, Asp147, Gln191, and Gly218; that span reads DSGGF. Positions 249–255 are RNA binding; sequence GVGKPED. The Nucleophile role is filled by Asp268. The segment at 273-277 is RNA binding; important for wobble base 34 recognition; sequence TRNAR. Zn(2+) is bound by residues Cys306, Cys308, Cys311, and His337.

This sequence belongs to the queuine tRNA-ribosyltransferase family. In terms of assembly, homodimer. Within each dimer, one monomer is responsible for RNA recognition and catalysis, while the other monomer binds to the replacement base PreQ1. Zn(2+) serves as cofactor.

The enzyme catalyses 7-aminomethyl-7-carbaguanine + guanosine(34) in tRNA = 7-aminomethyl-7-carbaguanosine(34) in tRNA + guanine. Its pathway is tRNA modification; tRNA-queuosine biosynthesis. Its function is as follows. Catalyzes the base-exchange of a guanine (G) residue with the queuine precursor 7-aminomethyl-7-deazaguanine (PreQ1) at position 34 (anticodon wobble position) in tRNAs with GU(N) anticodons (tRNA-Asp, -Asn, -His and -Tyr). Catalysis occurs through a double-displacement mechanism. The nucleophile active site attacks the C1' of nucleotide 34 to detach the guanine base from the RNA, forming a covalent enzyme-RNA intermediate. The proton acceptor active site deprotonates the incoming PreQ1, allowing a nucleophilic attack on the C1' of the ribose to form the product. After dissociation, two additional enzymatic reactions on the tRNA convert PreQ1 to queuine (Q), resulting in the hypermodified nucleoside queuosine (7-(((4,5-cis-dihydroxy-2-cyclopenten-1-yl)amino)methyl)-7-deazaguanosine). The sequence is that of Queuine tRNA-ribosyltransferase from Actinobacillus pleuropneumoniae serotype 5b (strain L20).